The primary structure comprises 107 residues: Putative pterin-4-alpha-carbinolamine dehydratase (107 aa).

It belongs to the pterin-4-alpha-carbinolamine dehydratase family.

It catalyses the reaction (4aS,6R)-4a-hydroxy-L-erythro-5,6,7,8-tetrahydrobiopterin = (6R)-L-erythro-6,7-dihydrobiopterin + H2O. This Paracoccus denitrificans (strain Pd 1222) protein is Putative pterin-4-alpha-carbinolamine dehydratase.